A 513-amino-acid polypeptide reads, in one-letter code: Cyclin-dependent kinase C-2 (513 aa).

The 301-residue stretch at 25 to 325 (FEKLEQIGEG…AKDALDAEYF (301 aa)) folds into the Protein kinase domain. ATP-binding positions include 31-39 (IGEGTYGQV) and Lys54. Thr35 is modified (phosphothreonine). Tyr36 carries the phosphotyrosine modification. Asp164 acts as the Proton acceptor in catalysis. Ser191 carries the phosphoserine modification. Thr198 is modified (phosphothreonine). A compositionally biased stretch (basic and acidic residues) spans 336–348 (SLPKYEASHEFQT). The segment at 336-513 (SLPKYEASHE…RNQQQYGNWQ (178 aa)) is disordered. Low complexity predominate over residues 417–433 (PNRYPQGGNQGGYNPNR). 2 stretches are compositionally biased toward gly residues: residues 457 to 478 (GGGM…GVGG) and 485 to 494 (GPYGASGPGR). Over residues 497–513 (NYNQGGSRNQQQYGNWQ) the composition is skewed to polar residues.

It belongs to the protein kinase superfamily. CMGC Ser/Thr protein kinase family. CDC2/CDKX subfamily.

The enzyme catalyses L-seryl-[protein] + ATP = O-phospho-L-seryl-[protein] + ADP + H(+). It carries out the reaction L-threonyl-[protein] + ATP = O-phospho-L-threonyl-[protein] + ADP + H(+). It catalyses the reaction [DNA-directed RNA polymerase] + ATP = phospho-[DNA-directed RNA polymerase] + ADP + H(+). This is Cyclin-dependent kinase C-2 (CDKC-2) from Oryza sativa subsp. japonica (Rice).